A 729-amino-acid polypeptide reads, in one-letter code: Phosphoribosylformylglycinamidine synthase subunit PurL (729 aa).

The active site involves His54. The ATP site is built by Tyr57 and Lys96. Residue Glu98 coordinates Mg(2+). Substrate contacts are provided by residues 99-102 and Arg121; that span reads SHNH. His100 serves as the catalytic Proton acceptor. Asp122 lines the Mg(2+) pocket. Gln245 serves as a coordination point for substrate. Asp273 lines the Mg(2+) pocket. 317-319 lines the substrate pocket; sequence ETQ. Asp495 and Gly532 together coordinate ATP. A Mg(2+)-binding site is contributed by Asn533. Ser535 provides a ligand contact to substrate.

This sequence belongs to the FGAMS family. As to quaternary structure, monomer. Part of the FGAM synthase complex composed of 1 PurL, 1 PurQ and 2 PurS subunits.

It is found in the cytoplasm. It carries out the reaction N(2)-formyl-N(1)-(5-phospho-beta-D-ribosyl)glycinamide + L-glutamine + ATP + H2O = 2-formamido-N(1)-(5-O-phospho-beta-D-ribosyl)acetamidine + L-glutamate + ADP + phosphate + H(+). It participates in purine metabolism; IMP biosynthesis via de novo pathway; 5-amino-1-(5-phospho-D-ribosyl)imidazole from N(2)-formyl-N(1)-(5-phospho-D-ribosyl)glycinamide: step 1/2. Part of the phosphoribosylformylglycinamidine synthase complex involved in the purines biosynthetic pathway. Catalyzes the ATP-dependent conversion of formylglycinamide ribonucleotide (FGAR) and glutamine to yield formylglycinamidine ribonucleotide (FGAM) and glutamate. The FGAM synthase complex is composed of three subunits. PurQ produces an ammonia molecule by converting glutamine to glutamate. PurL transfers the ammonia molecule to FGAR to form FGAM in an ATP-dependent manner. PurS interacts with PurQ and PurL and is thought to assist in the transfer of the ammonia molecule from PurQ to PurL. The polypeptide is Phosphoribosylformylglycinamidine synthase subunit PurL (Staphylococcus epidermidis (strain ATCC 35984 / DSM 28319 / BCRC 17069 / CCUG 31568 / BM 3577 / RP62A)).